The sequence spans 458 residues: tRNA modification GTPase MnmE (458 aa).

Residues Arg26, Glu88, and Arg127 each contribute to the (6S)-5-formyl-5,6,7,8-tetrahydrofolate site. Residues 224 to 378 (GLSTAIIGRP…IEDRINQLFF (155 aa)) form the TrmE-type G domain. Residue Asn234 participates in K(+) binding. GTP-binding positions include 234–239 (NVGKSS), 253–259 (TDIAGTT), and 278–281 (DTAG). Ser238 lines the Mg(2+) pocket. Residues Thr253, Ile255, and Thr258 each contribute to the K(+) site. Residue Thr259 participates in Mg(2+) binding. Residue Lys458 participates in (6S)-5-formyl-5,6,7,8-tetrahydrofolate binding.

The protein belongs to the TRAFAC class TrmE-Era-EngA-EngB-Septin-like GTPase superfamily. TrmE GTPase family. As to quaternary structure, homodimer. Heterotetramer of two MnmE and two MnmG subunits. K(+) is required as a cofactor.

Its subcellular location is the cytoplasm. Its function is as follows. Exhibits a very high intrinsic GTPase hydrolysis rate. Involved in the addition of a carboxymethylaminomethyl (cmnm) group at the wobble position (U34) of certain tRNAs, forming tRNA-cmnm(5)s(2)U34. This chain is tRNA modification GTPase MnmE, found in Streptococcus pyogenes serotype M5 (strain Manfredo).